A 329-amino-acid chain; its full sequence is Putative GTPase Obg (329 aa).

The region spanning 1 to 159 is the Obg domain; it reads MQFIDQARIM…WPLQLELKLL (159 aa). The region spanning 160 to 328 is the OBG-type G domain; that stretch reads AEVGIIGLPN…LKTQIWQQLG (169 aa). Residues 166-173, 191-195, 213-216, 280-283, and 309-311 each bind GTP; these read GLPNAGKS, FTTLI, DIPG, SKIE, and SSA. Residues Ser-173 and Thr-193 each coordinate Mg(2+).

This sequence belongs to the TRAFAC class OBG-HflX-like GTPase superfamily. OBG GTPase family. In terms of assembly, monomer. Mg(2+) is required as a cofactor.

It localises to the plastid. Its subcellular location is the organellar chromatophore. Functionally, an essential GTPase which binds GTP, GDP and possibly (p)ppGpp with moderate affinity, with high nucleotide exchange rates and a fairly low GTP hydrolysis rate. This is Putative GTPase Obg from Paulinella chromatophora.